Consider the following 606-residue polypeptide: Sodium-independent sulfate anion transporter (606 aa).

At 1-51 (MPSSVTALGQARSSGPGMAPSACCCSPAALQRRLPILAWLPSYSLQWLKMD) the chain is on the extracellular side. The chain crosses the membrane as a helical span at residues 52 to 72 (FVAGLSVGLTAIPQALAYAEV). Position 73 (A73) is a topological domain, cytoplasmic. Residues 74 to 94 (GLPPQYGLYSAFMGCFVYFFL) form a helical membrane-spanning segment. At 95–100 (GTSRDV) the chain is on the extracellular side. The chain crosses the membrane as a helical span at residues 101-117 (TLGPTAIMSLLVSFYTF). At 118-119 (HE) the chain is on the cytoplasmic side. A helical membrane pass occupies residues 120 to 140 (PAYAVLLAFLSGCIQLAMGVL). Topologically, residues 141 to 147 (RLGFLLD) are extracellular. A helical membrane pass occupies residues 148 to 168 (FISYPVIKGFTSAAAVTIGFG). Over 169–197 (QIKNLLGLQNIPRPFFLQVYHTFLRIAET) the chain is Cytoplasmic. A helical membrane pass occupies residues 198-218 (RVGDAVLGLVCMLLLLVLKLM). Over 219–250 (RDHVPPVHPEMPPGVRLSRGLVWAATTARNAL) the chain is Extracellular. A helical membrane pass occupies residues 251–271 (VVSFAALVAYSFEVTGYQPFI). Residues 272 to 307 (LTGETAEGLPPVRIPPFSVTTANGTISFTEMVQDMG) lie on the Cytoplasmic side of the membrane. The helical transmembrane segment at 308–328 (AGLAVVPLMGLLESIAVAKAF) threads the bilayer. Residues 329-341 (ASQNNYRIDANQE) are Extracellular-facing. A helical transmembrane segment spans residues 342 to 362 (LLAIGLTNMLGSLVSSYPVTG). The Cytoplasmic segment spans residues 363–374 (SFGRTAVNAQSG). Residues 375-395 (VCTPAGGLVTGVLVLLSLDYL) traverse the membrane as a helical segment. The Extracellular portion of the chain corresponds to 396 to 398 (TSL). A helical membrane pass occupies residues 399-419 (FYYIPKSALAAVIIMAVAPLF). At 420-441 (DTKIFRTLWRVKRLDLLPLCVT) the chain is on the cytoplasmic side. Residues 442–462 (FLLCFWEVQYGILAGALVSLL) traverse the membrane as a helical segment. The Extracellular segment spans residues 463 to 606 (MLLHSAARPE…LDQKVALLKA (144 aa)). Residues 470–584 (RPETKVSEGP…EAEKHLRQEP (115 aa)) form the STAS domain.

This sequence belongs to the SLC26A/SulP transporter (TC 2.A.53) family. As to expression, detected in all tissues tested with highest expression observed in brain, kidney, HEVEC and placenta and lowest in pancreas, skeletal muscle, liver, lung and heart.

It is found in the cell membrane. The protein localises to the lysosome membrane. The protein resides in the apical cell membrane. Its subcellular location is the basolateral cell membrane. It carries out the reaction hydrogencarbonate(in) + chloride(out) = hydrogencarbonate(out) + chloride(in). The catalysed reaction is sulfate(in) + H(+)(in) = sulfate(out) + H(+)(out). The enzyme catalyses oxalate(in) + chloride(out) = oxalate(out) + chloride(in). In terms of biological role, sodium-independent anion exchanger mediating bicarbonate, chloride, sulfate and oxalate transport. Exhibits sodium-independent sulfate anion transporter activity that may cooperate with SLC26A2 to mediate DIDS-sensitive sulfate uptake into high endothelial venules endothelial cells (HEVEC). In the kidney, mediates chloride-bicarbonate exchange, facilitating V-ATPase-mediated acid secretion. May function as a chloride channel, playing an important role in moderating chloride homeostasis and neuronal activity in the cerebellum. The sequence is that of Sodium-independent sulfate anion transporter from Homo sapiens (Human).